The primary structure comprises 1726 residues: Probable serine/threonine-protein kinase roco4 (1726 aa).

LRR repeat units follow at residues 256–277, 280–301, 303–324, and 326–347; these read KGKR…ITQM, HLVE…IQLL, SLRI…ICYL, and DLKI…VVQS. The 181-residue stretch at 364–544 folds into the Roc domain; it reads KSETWNKVKL…KRLIHEAEKS (181 aa). Residues 377–384, 428–432, and 487–490 contribute to the GTP site; these read GQEGVGKT, DFGGQ, and THSD. One can recognise a COR domain in the interval 591-787; the sequence is AINSQKERYI…RTYWRNGVLL (197 aa). Over residues 800 to 881 the composition is skewed to low complexity; that stretch reads SKQQQLQQQQ…STLNSQQLIN (82 aa). Residues 800 to 890 form a disordered region; that stretch reads SKQQQLQQQQ…NPSVSPLSST (91 aa). Residues 1026–1292 form the Protein kinase domain; that stretch reads IEYEKQIGKG…SYIVKELSEL (267 aa). ATP is bound by residues 1032–1040 and lysine 1055; that span reads IGKGGFGLV. Residue aspartate 1154 is the Proton acceptor of the active site. Over residues 1319–1331 the composition is skewed to polar residues; the sequence is ASTSSNADDGSQT. The tract at residues 1319–1385 is disordered; it reads ASTSSNADDG…SSPSTSFINS (67 aa). The segment covering 1332–1348 has biased composition (low complexity); that stretch reads NNNNNNNNNNNNNNNNN. Residues 1349 to 1364 are compositionally biased toward polar residues; that stretch reads SGSSIALSPSRSFEQQ. The segment covering 1365-1381 has biased composition (low complexity); that stretch reads TTTTTTTTTSPSSPSTS. WD repeat units follow at residues 1422-1461, 1463-1502, 1506-1546, 1589-1627, 1633-1670, and 1674-1714; these read SVHK…LINE, KCPH…IVQQ, PHKG…KKHS, KHST…ELQK, AHHE…KPFT, and HHKQ…EKKT.

This sequence belongs to the protein kinase superfamily. TKL Ser/Thr protein kinase family. ROCO subfamily.

The catalysed reaction is L-seryl-[protein] + ATP = O-phospho-L-seryl-[protein] + ADP + H(+). It catalyses the reaction L-threonyl-[protein] + ATP = O-phospho-L-threonyl-[protein] + ADP + H(+). The polypeptide is Probable serine/threonine-protein kinase roco4 (roco4) (Dictyostelium discoideum (Social amoeba)).